The sequence spans 57 residues: MLKVTLVKSLIGRKKDHIATAHALGLRKIGKTVEHEGTPQIKGMINKISYLLKVEEA.

Belongs to the universal ribosomal protein uL30 family. In terms of assembly, part of the 50S ribosomal subunit.

The sequence is that of Large ribosomal subunit protein uL30 from Clostridium perfringens (strain ATCC 13124 / DSM 756 / JCM 1290 / NCIMB 6125 / NCTC 8237 / Type A).